The chain runs to 348 residues: S-adenosylmethionine:tRNA ribosyltransferase-isomerase (348 aa).

The protein belongs to the QueA family. As to quaternary structure, monomer.

It localises to the cytoplasm. The catalysed reaction is 7-aminomethyl-7-carbaguanosine(34) in tRNA + S-adenosyl-L-methionine = epoxyqueuosine(34) in tRNA + adenine + L-methionine + 2 H(+). It participates in tRNA modification; tRNA-queuosine biosynthesis. In terms of biological role, transfers and isomerizes the ribose moiety from AdoMet to the 7-aminomethyl group of 7-deazaguanine (preQ1-tRNA) to give epoxyqueuosine (oQ-tRNA). This Polynucleobacter asymbioticus (strain DSM 18221 / CIP 109841 / QLW-P1DMWA-1) (Polynucleobacter necessarius subsp. asymbioticus) protein is S-adenosylmethionine:tRNA ribosyltransferase-isomerase.